A 506-amino-acid chain; its full sequence is Maturase K (506 aa).

Belongs to the intron maturase 2 family. MatK subfamily.

The protein resides in the plastid. The protein localises to the chloroplast. Usually encoded in the trnK tRNA gene intron. Probably assists in splicing its own and other chloroplast group II introns. In Lathyrus sativus (White vetchling), this protein is Maturase K.